Here is a 311-residue protein sequence, read N- to C-terminus: Formimidoylglutamase (311 aa).

Mn(2+)-binding residues include His130, Asp155, His157, Asp159, Cys242, and Asp244.

It belongs to the arginase family. Requires Mn(2+) as cofactor.

The catalysed reaction is N-formimidoyl-L-glutamate + H2O = formamide + L-glutamate. Its pathway is amino-acid degradation; L-histidine degradation into L-glutamate; L-glutamate from N-formimidoyl-L-glutamate (hydrolase route): step 1/1. Functionally, catalyzes the conversion of N-formimidoyl-L-glutamate to L-glutamate and formamide. In Staphylococcus haemolyticus (strain JCSC1435), this protein is Formimidoylglutamase.